Consider the following 116-residue polypeptide: Cystatin (116 aa).

A Secondary area of contact motif is present at residues 53–57; that stretch reads QLVSG. 2 disulfide bridges follow: cysteine 71–cysteine 81 and cysteine 95–cysteine 115. Serine 80 is subject to Phosphoserine.

It belongs to the cystatin family.

Its subcellular location is the secreted. Functionally, this protein binds tightly to and inhibits papain and cathepsin B. In Coturnix japonica (Japanese quail), this protein is Cystatin.